A 63-amino-acid chain; its full sequence is Venom peptide 2b (63 aa).

The first 22 residues, 1–22 (MRGTSFILFAVVVILGFLHGNA), serve as a signal peptide directing secretion. 5 AXPX repeats span residues 22 to 25 (AEPL), 26 to 29 (ANPE), 32 to 35 (ANPD), 38 to 41 (ANPD), and 44 to 47 (ANPE). A propeptide spanning residues 23 to 48 (EPLANPEPSANPDPLANPDPLANPEA) is cleaved from the precursor. Leu62 is subject to Leucine amide.

Belongs to the MCD family. Mastoparan subfamily. As to expression, expressed by the venom gland.

It localises to the secreted. The protein resides in the target cell membrane. Functionally, antimicrobial peptide with strong and moderate activity against the fungi B.cinerea (MIC=5 uM) and C.albicans (MIC=100 uM), the Gram-negative bacterium E.coli (MIC=200 uM) and the Gram-positive bacterium S.aureus (MIC=25 uM). Shows cytolytic activity against insect cell lines. Has potent hemolytic activity against human erythrocytes (EC(50)=64 uM). In vivo, peptide injection in the vicinity of the head and thorax of lepidopteran larvae induces feeding disorder followed by death due to starvation. The chain is Venom peptide 2b from Eumenes pomiformis (Potter wasp).